The primary structure comprises 2303 residues: Genome polyprotein (2303 aa).

A zinc finger lies at 3–14 (CKHGYPDVCPIC). Residues 30–46 (DGEWYPTDLLCVDLDDD) are acidic. The interval 60–73 (MDWTDVPLIRDIVM) is theilo. The tract at residues 74–93 (EPQGNSSSSDKSNSQSSGNE) is disordered. Residue Gly-77 is the site of N-myristoyl glycine; by host attachment. Over residues 78–92 (NSSSSDKSNSQSSGN) the composition is skewed to low complexity. Cys-501 and Cys-503 are oxidised to a cystine. A host EIF4E binding region spans residues 1041-1047 (YYRQRLI). The region spanning 1283 to 1448 (IPLASLCEKF…CKTPAGMLDV (166 aa)) is the SF3 helicase domain. 1312 to 1319 (GAAGQGKS) contributes to the ATP binding site. Tyr-1608 carries the post-translational modification O-(5'-phospho-RNA)-tyrosine. A Peptidase C3 domain is found at 1636–1829 (NPVMDFELFC…AATIITKELI (194 aa)). Residues His-1680, Asp-1714, and Cys-1793 each act as for protease 3C activity in the active site. A RdRp catalytic domain is found at 2071 to 2189 (NYVYDVDYSN…GTNYQIDFNL (119 aa)). Active-site for RdRp activity residues include Asp-2077 and Asp-2175.

Belongs to the picornaviruses polyprotein family. Interacts with host EIF4E. Interacts with the leader protein. In terms of assembly, interacts with host RAN; the complex L-RAN recruits cellular kinases responsible for the L-induced nucleocytoplasmic trafficking inhibition. The complex L-RAN can further bind to the host exportins XPO1/CRM1 and CSE1L/CAS. Interacts with the protein 2A. Interacts with host RNASEL; this interaction prevents RNASEL activation by its substrate 2'-5' oligoadenylates. Post-translationally, phosphorylated. Specific enzymatic cleavages by the viral protease in vivo yield a variety of precursors and mature proteins. The polyprotein seems to be cotranslationally cleaved at the 2A/2B junction by a ribosomal skip from one codon to the next without formation of a peptide bond. This process would release the P1-2A peptide from the translational complex. In terms of processing, during virion maturation, immature virions are rendered infectious following cleavage of VP0 into VP4 and VP2. This maturation seems to be an autocatalytic event triggered by the presence of RNA in the capsid and is followed by a conformational change of the particle. Post-translationally, uridylylated by the polymerase and is covalently linked to the 5'-end of genomic RNA. This uridylylated form acts as a nucleotide-peptide primer for the polymerase. Myristoylation is required during RNA encapsidation and formation of the mature virus particle.

Its subcellular location is the virion. It is found in the host cytoplasm. It localises to the host nucleus. The protein localises to the host nucleolus. The protein resides in the host cytoplasmic vesicle membrane. The catalysed reaction is RNA(n) + a ribonucleoside 5'-triphosphate = RNA(n+1) + diphosphate. It catalyses the reaction ATP + H2O = ADP + phosphate + H(+). The enzyme catalyses Selective cleavage of Gln-|-Gly bond in the poliovirus polyprotein. In other picornavirus reactions Glu may be substituted for Gln, and Ser or Thr for Gly.. In terms of biological role, forms a complex with host RAN and probably binds to exportins carrying activated MAPK in order to mediate the hyperphosphorylation of host Phe/Gly containing nuclear pore proteins (Nups) resulting in cessation of active nucleocytoplasmic transport. Proteins with NLS signals fail to import, cellular mRNAs fail to export, and some proteins small enough for diffusion are not retained anymore (efflux). The resulting inhibition of cellular protein synthesis serves to ensure maximal viral gene expression and to evade host immune response. The leader protein also inhibits host interferon regulatory factor 3 (IRF3) dimerization, thereby blocking the transcriptional activation of IFN genes. Binds to host RNase L thereby preventing its activation by 2'-5' oligoadenylates in order to counteract the antiviral interferon-inducible OAS/RNase L pathway. Inhibits the integrated stress response (ISR) in the infected cell. Inhibits the host EIF2AK2/PKR by rendering this kinase unable to detect double-stranded RNA. Also impairs host stress granule formation probably by acting on a step downstream of EIF2AK2/PKR activation. Forms an icosahedral capsid of pseudo T=3 symmetry with capsid proteins VP2 and VP3. Together they form an icosahedral capsid composed of 60 copies of each VP1, VP2, and VP3, with a diameter of approximately 300 Angstroms. VP4 lies on the inner surface of the protein shell formed by VP1, VP2 and VP3. All the three latter proteins contain a beta-sheet structure called beta-barrel jelly roll. VP1 is situated at the 12 fivefold axes, whereas VP2 and VP3 are located at the quasi-sixfold axes. Its function is as follows. Lies on the inner surface of the capsid shell. After binding to the host receptor, the capsid undergoes conformational changes. Capsid protein VP4 is released, capsid protein VP1 N-terminus is externalized, and together, they shape a pore in the host membrane through which the viral genome is translocated into the host cell cytoplasm. After genome has been released, the channel shrinks. Functionally, VP0 precursor is a component of immature procapsids. In terms of biological role, involved in host translation shutoff by inhibiting cap-dependent mRNA translation. Nuclear localization is required for this function. The resulting inhibition of cellular protein synthesis serves to ensure maximal viral gene expression and to evade host immune response. Inhibits the phosphorylation of the leader protein. Affects membrane integrity and causes an increase in membrane permeability. Its function is as follows. Associates with and induces structural rearrangements of intracellular membranes. It displays RNA-binding, nucleotide binding and NTPase activities. Functionally, serves as membrane anchor via its hydrophobic domain. In terms of biological role, forms a primer, VPg-pU, which is utilized by the polymerase for the initiation of RNA chains. Cysteine protease that generates mature viral proteins from the precursor polyprotein. In addition to its proteolytic activity, it binds to viral RNA, and thus influences viral genome replication. RNA and substrate cooperatively bind to the protease. Cleaves host PABP1, this cleavage is important for viral replication. Its function is as follows. Replicates the genomic and antigenomic RNAs by recognizing replications specific signals. Performs VPg uridylylation. This chain is Genome polyprotein, found in Mus musculus (Mouse).